Reading from the N-terminus, the 81-residue chain is Sec-independent protein translocase protein TatA (81 aa).

The chain crosses the membrane as a helical span at residues 1–21 (MGMPSGQELLIILAIVVLLFG). The tract at residues 45 to 81 (NEDDDTEVKSASTEAPKKVESAEEVASKESSKTPTQA) is disordered. A compositionally biased stretch (basic and acidic residues) spans 59-75 (APKKVESAEEVASKESS).

The protein belongs to the TatA/E family. As to quaternary structure, the Tat system comprises two distinct complexes: a TatABC complex, containing multiple copies of TatA, TatB and TatC subunits, and a separate TatA complex, containing only TatA subunits. Substrates initially bind to the TatABC complex, which probably triggers association of the separate TatA complex to form the active translocon.

Its subcellular location is the cell inner membrane. Its function is as follows. Part of the twin-arginine translocation (Tat) system that transports large folded proteins containing a characteristic twin-arginine motif in their signal peptide across membranes. TatA could form the protein-conducting channel of the Tat system. The protein is Sec-independent protein translocase protein TatA of Sulfurimonas denitrificans (strain ATCC 33889 / DSM 1251) (Thiomicrospira denitrificans (strain ATCC 33889 / DSM 1251)).